Consider the following 493-residue polypeptide: ATP synthase subunit beta, chloroplastic (493 aa).

Residue 170 to 177 (GGAGVGKT) participates in ATP binding.

It belongs to the ATPase alpha/beta chains family. As to quaternary structure, F-type ATPases have 2 components, CF(1) - the catalytic core - and CF(0) - the membrane proton channel. CF(1) has five subunits: alpha(3), beta(3), gamma(1), delta(1), epsilon(1). CF(0) has four main subunits: a(1), b(1), b'(1) and c(9-12).

The protein localises to the plastid. Its subcellular location is the chloroplast thylakoid membrane. It carries out the reaction ATP + H2O + 4 H(+)(in) = ADP + phosphate + 5 H(+)(out). Functionally, produces ATP from ADP in the presence of a proton gradient across the membrane. The catalytic sites are hosted primarily by the beta subunits. This is ATP synthase subunit beta, chloroplastic from Chaetosphaeridium globosum (Charophycean green alga).